A 251-amino-acid chain; its full sequence is NADPH-dependent oxidoreductase (251 aa).

It belongs to the flavin oxidoreductase frp family. It depends on FMN as a cofactor.

Reduces FMN, organic nitro compounds and disulfide DTNB. Involved in maintenance of the cellular redox state and the disulfide stress response. The chain is NADPH-dependent oxidoreductase (nfrA) from Staphylococcus saprophyticus subsp. saprophyticus (strain ATCC 15305 / DSM 20229 / NCIMB 8711 / NCTC 7292 / S-41).